The sequence spans 291 residues: MAGTKEIRTKIKSVQNTRKITKAMEMVAASKMRKAQERMRSARPYAEKVRNIAAHLATANPEFKHPFMQEREVKRVGMIVVTTDKGLCGGLNTNVLRAVTNELKTLQGRGVDVQATAIGTKGMQFLGRVGAKVISHVVHLGDTPHLEKLIGAIKVQLDAFTNGEVDAVYLAYTKFINTMKQEPMVEQLLPLAADKLVQTEEEKRAYSWDYIYEPDAQTVVEELLVRYVEALVYQAVAENMASEQSARMVAMKAASDNAKNVIGELQLVYNKTRQAAITKELSEIVSGAAAV.

It belongs to the ATPase gamma chain family. In terms of assembly, F-type ATPases have 2 components, CF(1) - the catalytic core - and CF(0) - the membrane proton channel. CF(1) has five subunits: alpha(3), beta(3), gamma(1), delta(1), epsilon(1). CF(0) has three main subunits: a, b and c.

The protein localises to the cell inner membrane. Produces ATP from ADP in the presence of a proton gradient across the membrane. The gamma chain is believed to be important in regulating ATPase activity and the flow of protons through the CF(0) complex. This chain is ATP synthase gamma chain, found in Cupriavidus necator (strain ATCC 17699 / DSM 428 / KCTC 22496 / NCIMB 10442 / H16 / Stanier 337) (Ralstonia eutropha).